Consider the following 193-residue polypeptide: Proteasome subunit beta 1 (193 aa).

Residues 1-4 constitute a propeptide, removed in mature form; by autocatalysis; that stretch reads MPGA. The Nucleophile role is filled by threonine 5.

The protein belongs to the peptidase T1B family. As to quaternary structure, the 20S proteasome core is composed of 14 alpha and 14 beta subunits that assemble into four stacked heptameric rings, resulting in a barrel-shaped structure. The two inner rings, each composed of seven catalytic beta subunits, are sandwiched by two outer rings, each composed of seven alpha subunits. The catalytic chamber with the active sites is on the inside of the barrel. Has a gated structure, the ends of the cylinder being occluded by the N-termini of the alpha-subunits. Is capped at one or both ends by the proteasome regulatory ATPase, PAN.

It localises to the cytoplasm. It carries out the reaction Cleavage of peptide bonds with very broad specificity.. The formation of the proteasomal ATPase PAN-20S proteasome complex, via the docking of the C-termini of PAN into the intersubunit pockets in the alpha-rings, triggers opening of the gate for substrate entry. Interconversion between the open-gate and close-gate conformations leads to a dynamic regulation of the 20S proteasome proteolysis activity. Component of the proteasome core, a large protease complex with broad specificity involved in protein degradation. This is Proteasome subunit beta 1 from Cenarchaeum symbiosum (strain A).